Consider the following 160-residue polypeptide: Nutritionally-regulated adipose and cardiac enriched protein homolog (160 aa).

Residues 1 to 69 (MRTAAGAVSP…AKPQRTSRRV (69 aa)) form a disordered region. 2 stretches are compositionally biased toward basic and acidic residues: residues 12–25 (SRPE…KNEE) and 33–42 (CRAEREDNRK). The helical transmembrane segment at 101 to 121 (GGSLLLQLCVCVLLVLALGLY) threads the bilayer.

Its subcellular location is the cell membrane. This is Nutritionally-regulated adipose and cardiac enriched protein homolog (NRAC) from Homo sapiens (Human).